The sequence spans 150 residues: 6,7-dimethyl-8-ribityllumazine synthase (150 aa).

5-amino-6-(D-ribitylamino)uracil-binding positions include F11, 43–45, and 67–69; these read VYD and AVI. 72 to 73 contributes to the (2S)-2-hydroxy-3-oxobutyl phosphate binding site; the sequence is AT. H75 serves as the catalytic Proton donor. L100 contributes to the 5-amino-6-(D-ribitylamino)uracil binding site. R115 contributes to the (2S)-2-hydroxy-3-oxobutyl phosphate binding site.

Belongs to the DMRL synthase family.

It catalyses the reaction (2S)-2-hydroxy-3-oxobutyl phosphate + 5-amino-6-(D-ribitylamino)uracil = 6,7-dimethyl-8-(1-D-ribityl)lumazine + phosphate + 2 H2O + H(+). It functions in the pathway cofactor biosynthesis; riboflavin biosynthesis; riboflavin from 2-hydroxy-3-oxobutyl phosphate and 5-amino-6-(D-ribitylamino)uracil: step 1/2. In terms of biological role, catalyzes the formation of 6,7-dimethyl-8-ribityllumazine by condensation of 5-amino-6-(D-ribitylamino)uracil with 3,4-dihydroxy-2-butanone 4-phosphate. This is the penultimate step in the biosynthesis of riboflavin. The chain is 6,7-dimethyl-8-ribityllumazine synthase from Pyrobaculum neutrophilum (strain DSM 2338 / JCM 9278 / NBRC 100436 / V24Sta) (Thermoproteus neutrophilus).